Consider the following 109-residue polypeptide: Phosphoribosyl-AMP cyclohydrolase (109 aa).

Mg(2+) is bound at residue Asp80. Zn(2+) is bound at residue Cys81. The Mg(2+) site is built by Asp82 and Asp84. Cys97 and Cys104 together coordinate Zn(2+).

This sequence belongs to the PRA-CH family. In terms of assembly, homodimer. Mg(2+) serves as cofactor. Requires Zn(2+) as cofactor.

Its subcellular location is the cytoplasm. It carries out the reaction 1-(5-phospho-beta-D-ribosyl)-5'-AMP + H2O = 1-(5-phospho-beta-D-ribosyl)-5-[(5-phospho-beta-D-ribosylamino)methylideneamino]imidazole-4-carboxamide. It functions in the pathway amino-acid biosynthesis; L-histidine biosynthesis; L-histidine from 5-phospho-alpha-D-ribose 1-diphosphate: step 3/9. In terms of biological role, catalyzes the hydrolysis of the adenine ring of phosphoribosyl-AMP. This chain is Phosphoribosyl-AMP cyclohydrolase, found in Clostridium beijerinckii (strain ATCC 51743 / NCIMB 8052) (Clostridium acetobutylicum).